A 629-amino-acid polypeptide reads, in one-letter code: tRNA uridine 5-carboxymethylaminomethyl modification enzyme MnmG (629 aa).

Residues 13–18, valine 125, and serine 180 each bind FAD; that span reads GGGHAG. 273 to 287 lines the NAD(+) pocket; sequence GPRYCPSIEDKIHRF. Residue glutamine 370 participates in FAD binding.

Belongs to the MnmG family. In terms of assembly, homodimer. Heterotetramer of two MnmE and two MnmG subunits. The cofactor is FAD.

The protein resides in the cytoplasm. In terms of biological role, NAD-binding protein involved in the addition of a carboxymethylaminomethyl (cmnm) group at the wobble position (U34) of certain tRNAs, forming tRNA-cmnm(5)s(2)U34. The polypeptide is tRNA uridine 5-carboxymethylaminomethyl modification enzyme MnmG (Shewanella sp. (strain MR-7)).